The sequence spans 546 residues: CTP synthase (546 aa).

Residues 1–266 (MTTRYIFVTG…DQLVTKRFGI (266 aa)) are amidoligase domain. Residue Ser-14 participates in CTP binding. Residue Ser-14 participates in UTP binding. Residues 15 to 20 (SLGKGI) and Asp-72 contribute to the ATP site. 2 residues coordinate Mg(2+): Asp-72 and Glu-140. Residues 147-149 (DIE), 187-192 (KTKPTQ), and Lys-223 each bind CTP. Residues 187–192 (KTKPTQ) and Lys-223 contribute to the UTP site. ATP is bound at residue 239-241 (KDV). Positions 291–542 (TIGMVGKYIE…VAAAYTYQKR (252 aa)) constitute a Glutamine amidotransferase type-1 domain. Gly-352 provides a ligand contact to L-glutamine. Residue Cys-379 is the Nucleophile; for glutamine hydrolysis of the active site. Residues 380 to 383 (LGMQ), Glu-403, and Arg-470 each bind L-glutamine. Residues His-515 and Glu-517 contribute to the active site.

This sequence belongs to the CTP synthase family. In terms of assembly, homotetramer.

The catalysed reaction is UTP + L-glutamine + ATP + H2O = CTP + L-glutamate + ADP + phosphate + 2 H(+). It catalyses the reaction L-glutamine + H2O = L-glutamate + NH4(+). It carries out the reaction UTP + NH4(+) + ATP = CTP + ADP + phosphate + 2 H(+). The protein operates within pyrimidine metabolism; CTP biosynthesis via de novo pathway; CTP from UDP: step 2/2. Allosterically activated by GTP, when glutamine is the substrate; GTP has no effect on the reaction when ammonia is the substrate. The allosteric effector GTP functions by stabilizing the protein conformation that binds the tetrahedral intermediate(s) formed during glutamine hydrolysis. Inhibited by the product CTP, via allosteric rather than competitive inhibition. Catalyzes the ATP-dependent amination of UTP to CTP with either L-glutamine or ammonia as the source of nitrogen. Regulates intracellular CTP levels through interactions with the four ribonucleotide triphosphates. The protein is CTP synthase of Shewanella halifaxensis (strain HAW-EB4).